The chain runs to 270 residues: Sulfur carrier protein FdhD (270 aa).

Composition is skewed to basic and acidic residues over residues 1-10 and 20-30; these read MSMQDHDRTE and RHLDGSSRPDW. Residues 1–30 form a disordered region; the sequence is MSMQDHDRTEQGMTSLAVTRHLDGSSRPDW. Catalysis depends on Cys-117, which acts as the Cysteine persulfide intermediate.

It belongs to the FdhD family.

The protein localises to the cytoplasm. Required for formate dehydrogenase (FDH) activity. Acts as a sulfur carrier protein that transfers sulfur from IscS to the molybdenum cofactor prior to its insertion into FDH. This is Sulfur carrier protein FdhD from Chromobacterium violaceum (strain ATCC 12472 / DSM 30191 / JCM 1249 / CCUG 213 / NBRC 12614 / NCIMB 9131 / NCTC 9757 / MK).